A 348-amino-acid chain; its full sequence is NAC domain-containing protein 101 (348 aa).

The region spanning 7–156 (IPPGYRFHPT…GWVVCRAFKK (150 aa)) is the NAC domain. The DNA-binding element occupies 107-162 (VGMRKTLVFYKGRAPNGQKSDWIMHEYRLETDENGPPHEEGWVVCRAFKKKLTTMN). The segment at 325-348 (MVSMNASSSSSPCSFYSWAQNTHT) is disordered. Low complexity predominate over residues 327–341 (SMNASSSSSPCSFYS).

It belongs to the plant vascular related NAC-domain protein family. In terms of assembly, homodimer. As to expression, expressed in root inner metaxylem vessels and in hypocotyl vessels. Present in root developing xylems. Accumulates in the xylem but not in interfascicular fibers or pith cells in inflorescence stems. Absent from secondary xylem in roots.

The protein resides in the nucleus. Transcription activator that binds to the secondary wall NAC binding element (SNBE), 5'-(T/A)NN(C/T)(T/C/G)TNNNNNNNA(A/C)GN(A/C/T)(A/T)-3', and to the tracheary elements (TE) specific regulating cis-element (TERE), 5'-CTTNAAAGCNA-3', in the promoter of target genes (e.g. genes involved in secondary wall biosynthesis, cell wall modification such as xylan accumulation, and programmed cell death). Involved in xylem formation in roots and shoots, especially regulating metaxylem vessel differentiation by promoting immature xylem vessel-specific genes expression, especially genes regulating programmed cell death (PCD) and secondary wall formation in tracheary elements (TE). Can activate MYB25, MYB46, MYB58, MYB63, MYB83, MYB103, CESA4, LBD15, LBD30, ERF115, XCP1, XCP2, NAC010/SND3, KNAT7, ASL19 and ASL20 expression. This chain is NAC domain-containing protein 101, found in Arabidopsis thaliana (Mouse-ear cress).